A 937-amino-acid polypeptide reads, in one-letter code: Protein Niban 1 (937 aa).

Residue Gly-2 is the site of N-myristoyl glycine attachment. Phosphoserine occurs at positions 578, 581, 595, 601, and 646. Over residues 584 to 595 (DLKTSMGSNQAS) the composition is skewed to polar residues. Disordered stretches follow at residues 584–710 (DLKT…GSLR) and 724–891 (SAPE…LGGN). A compositionally biased stretch (low complexity) spans 640 to 651 (ASISGSSPPSGE). Polar residues predominate over residues 655 to 681 (VSVSGVDNSAGNPLSADNSAGPLSSHL). The span at 688–701 (EPPKDEETAHKRPE) shows a compositional bias: basic and acidic residues. A phosphoserine mark is found at Ser-708 and Ser-768. 2 stretches are compositionally biased toward polar residues: residues 802–817 (PTSQ…NTSC) and 855–869 (VTVT…SSNP).

Belongs to the Niban family. In terms of tissue distribution, detected in brain, lung, spleen and skeletal muscle. Expressed in small renal tumors but not in normal kidney.

Its subcellular location is the cytoplasm. It localises to the membrane. Its function is as follows. Regulates phosphorylation of a number of proteins involved in translation regulation including EIF2A, EIF4EBP1 and RPS6KB1. May be involved in the endoplasmic reticulum stress response. The chain is Protein Niban 1 from Rattus norvegicus (Rat).